The chain runs to 156 residues: Endoribonuclease YbeY (156 aa).

The Zn(2+) site is built by histidine 111, histidine 115, and histidine 121.

Belongs to the endoribonuclease YbeY family. The cofactor is Zn(2+).

The protein localises to the cytoplasm. Functionally, single strand-specific metallo-endoribonuclease involved in late-stage 70S ribosome quality control and in maturation of the 3' terminus of the 16S rRNA. This Hahella chejuensis (strain KCTC 2396) protein is Endoribonuclease YbeY.